Here is a 579-residue protein sequence, read N- to C-terminus: DNA ligase 1 (579 aa).

Glu244 is an ATP binding site. The N6-AMP-lysine intermediate role is filled by Lys246. ATP-binding residues include Arg251, Arg266, Glu296, Phe342, Arg419, and Lys425.

This sequence belongs to the ATP-dependent DNA ligase family. Mg(2+) serves as cofactor.

It carries out the reaction ATP + (deoxyribonucleotide)n-3'-hydroxyl + 5'-phospho-(deoxyribonucleotide)m = (deoxyribonucleotide)n+m + AMP + diphosphate.. Functionally, DNA ligase that seals nicks in double-stranded DNA during DNA replication, DNA recombination and DNA repair. The protein is DNA ligase 1 of Methanosarcina mazei (strain ATCC BAA-159 / DSM 3647 / Goe1 / Go1 / JCM 11833 / OCM 88) (Methanosarcina frisia).